The sequence spans 188 residues: ATP synthase subunit delta (188 aa).

The protein belongs to the ATPase delta chain family. F-type ATPases have 2 components, F(1) - the catalytic core - and F(0) - the membrane proton channel. F(1) has five subunits: alpha(3), beta(3), gamma(1), delta(1), epsilon(1). F(0) has three main subunits: a(1), b(2) and c(10-14). The alpha and beta chains form an alternating ring which encloses part of the gamma chain. F(1) is attached to F(0) by a central stalk formed by the gamma and epsilon chains, while a peripheral stalk is formed by the delta and b chains.

It is found in the cell inner membrane. F(1)F(0) ATP synthase produces ATP from ADP in the presence of a proton or sodium gradient. F-type ATPases consist of two structural domains, F(1) containing the extramembraneous catalytic core and F(0) containing the membrane proton channel, linked together by a central stalk and a peripheral stalk. During catalysis, ATP synthesis in the catalytic domain of F(1) is coupled via a rotary mechanism of the central stalk subunits to proton translocation. Its function is as follows. This protein is part of the stalk that links CF(0) to CF(1). It either transmits conformational changes from CF(0) to CF(1) or is implicated in proton conduction. This is ATP synthase subunit delta from Rhizobium rhizogenes (strain K84 / ATCC BAA-868) (Agrobacterium radiobacter).